Reading from the N-terminus, the 196-residue chain is MLLLIDNYDSFTYNLVHYLGELGAELDVRRNDSLTVEEAMALRPEGIVLSPGPCDPDKAGICLPLIDAAAKAAVPLMGVCLGHQAIGQPFGGTVVRAPVPMHGKVDRMFHQGRGVLKDLPSPFRATRYHSLIVERATLPACLEVTGETEDGLIMALSHRELPIHGVQFHPESIESEHGHKILENFLNTTRRLETAA.

Residues 1–195 enclose the Glutamine amidotransferase type-1 domain; the sequence is MLLLIDNYDS…LNTTRRLETA (195 aa). 52 to 54 contacts L-glutamine; that stretch reads GPC. The active-site Nucleophile; for GATase activity is the cysteine 80. Residues glutamine 84 and 130–131 contribute to the L-glutamine site; that span reads SL. Active-site for GATase activity residues include histidine 169 and glutamate 171.

Heterotetramer consisting of two non-identical subunits: a beta subunit (TrpG) and a large alpha subunit (TrpE).

The catalysed reaction is chorismate + L-glutamine = anthranilate + pyruvate + L-glutamate + H(+). It functions in the pathway amino-acid biosynthesis; L-tryptophan biosynthesis; L-tryptophan from chorismate: step 1/5. Its function is as follows. Part of a heterotetrameric complex that catalyzes the two-step biosynthesis of anthranilate, an intermediate in the biosynthesis of L-tryptophan. In the first step, the glutamine-binding beta subunit (TrpG) of anthranilate synthase (AS) provides the glutamine amidotransferase activity which generates ammonia as a substrate that, along with chorismate, is used in the second step, catalyzed by the large alpha subunit of AS (TrpE) to produce anthranilate. In the absence of TrpG, TrpE can synthesize anthranilate directly from chorismate and high concentrations of ammonia. Participates in the tryptophan-dependent indole-3-acetic acid production, which is a phytohormone released by A.brasilense. The sequence is that of Anthranilate synthase component 2 (trpG) from Azospirillum brasilense.